We begin with the raw amino-acid sequence, 448 residues long: MHISKPAGPLPAPVPFYRQLYFQVVVAIVLGALLGHFEPAFAESLKPLGDAFIKLVKMIIAPVIFLTIVTGIAGMTHLKTVGRVFAKSMTYFLFFSTLALIVGMVVAHVVQPGAGMNINPAELDQSAVNTYVQKSHELSLVGFLMDIIPATLISAFVDGNILQVLFVAVLFGIALALVGERGRPVLSFLEALTAPVFRLVHMLMKAAPIGAFGAIAFTIGKYGVESLVNLAWLVGSFYLTSLFFVLVILGIVCRLCGFSVLKLIRYLKAELLLVLGTSSSESALPSLMEKMEKAGCEKSVVGLVVPTGYSFNLDGTNIYMTLAALFIAQATNVDLTLGQQITLLAVAMLSSKGAAGVTGAGFITLAATLSVVPDVPVAGMALILGVDRFMSECRSLTNFIGNAVATVVVSRWENALDRDQLSLALDGRAPPLQAPVPPPDAVAPVSAR.

The next 7 helical transmembrane spans lie at 22 to 42, 55 to 75, 90 to 110, 137 to 157, 159 to 179, 199 to 219, and 232 to 252; these read FQVV…PAFA, LVKM…IAGM, TYFL…AHVV, ELSL…SAFV, GNIL…ALVG, LVHM…AFTI, and WLVG…LGIV. Residues 428–448 are disordered; the sequence is RAPPLQAPVPPPDAVAPVSAR. Over residues 432–441 the composition is skewed to pro residues; that stretch reads LQAPVPPPDA.

Belongs to the dicarboxylate/amino acid:cation symporter (DAACS) (TC 2.A.23) family.

The protein resides in the cell inner membrane. In terms of biological role, responsible for the transport of dicarboxylates such as succinate, fumarate, and malate from the periplasm across the membrane. This Xanthomonas campestris pv. campestris (strain 8004) protein is C4-dicarboxylate transport protein.